Here is a 173-residue protein sequence, read N- to C-terminus: MDLKATIRTLPNWPIEGVMFRDITTLLQDPAAFKEAINRFYDRYRTMKIDKIVGIDARGLIFGAPLAYKLEVGFVPVRKKGKIPFRTIGAAYSLEYGESMVEIHEDAILKGERVVVVDDLIATGGTVKATIDLVEKLGGEVVECAFVIDLPDLKGREKIRDYKMFALMEFEGE.

The protein belongs to the purine/pyrimidine phosphoribosyltransferase family. In terms of assembly, homodimer.

It localises to the cytoplasm. It carries out the reaction AMP + diphosphate = 5-phospho-alpha-D-ribose 1-diphosphate + adenine. It functions in the pathway purine metabolism; AMP biosynthesis via salvage pathway; AMP from adenine: step 1/1. Catalyzes a salvage reaction resulting in the formation of AMP, that is energically less costly than de novo synthesis. In Desulfosudis oleivorans (strain DSM 6200 / JCM 39069 / Hxd3) (Desulfococcus oleovorans), this protein is Adenine phosphoribosyltransferase.